Consider the following 898-residue polypeptide: Serine/threonine-protein kinase PKH3 (898 aa).

Residues 11-293 (FIFKEELGHG…LEQIKRHPYF (283 aa)) enclose the Protein kinase domain. Residues 17–25 (LGHGSYSTV) and K41 contribute to the ATP site. Catalysis depends on D138, which acts as the Proton acceptor. Disordered regions lie at residues 435–484 (PPKV…PSTE) and 675–850 (DSKA…EKYS). A compositionally biased stretch (polar residues) spans 459–468 (PLQTSSIPQK). Low complexity predominate over residues 469 to 483 (LSTSSASSALSAPST). S696 carries the phosphoserine modification. Residues 697–721 (IGNNVTTLSYTAKNGSQNNAPQNDN) show a composition bias toward polar residues. The span at 723-738 (GEEKPFRIPSSTKDRP) shows a compositional bias: basic and acidic residues. 3 stretches are compositionally biased toward polar residues: residues 740 to 758 (ANSTPSSRHPRVLSSNNAG), 771 to 782 (SAPSTNTYTNGS), and 789 to 803 (RPSTNVGNNKHNILT). The residue at position 753 (S753) is a Phosphoserine. Residues 804 to 817 (SKKQGSSVFSPSSS) are compositionally biased toward low complexity. The span at 818 to 831 (TTKPQIKTTGYRQP) shows a compositional bias: polar residues. S871 is subject to Phosphoserine.

Belongs to the protein kinase superfamily. Ser/Thr protein kinase family.

It catalyses the reaction L-seryl-[protein] + ATP = O-phospho-L-seryl-[protein] + ADP + H(+). It carries out the reaction L-threonyl-[protein] + ATP = O-phospho-L-threonyl-[protein] + ADP + H(+). In terms of biological role, serine/threonine-protein kinase which may phosphorylate the same targets substrates as PKH1 and PKH2, 2 upstream activators of PKC1. In Saccharomyces cerevisiae (strain ATCC 204508 / S288c) (Baker's yeast), this protein is Serine/threonine-protein kinase PKH3 (PKH3).